The chain runs to 115 residues: Large ribosomal subunit protein bL19 (115 aa).

This sequence belongs to the bacterial ribosomal protein bL19 family.

This protein is located at the 30S-50S ribosomal subunit interface and may play a role in the structure and function of the aminoacyl-tRNA binding site. The sequence is that of Large ribosomal subunit protein bL19 from Hydrogenovibrio crunogenus (strain DSM 25203 / XCL-2) (Thiomicrospira crunogena).